A 186-amino-acid polypeptide reads, in one-letter code: Peptidyl-tRNA hydrolase (186 aa).

Tyr14 lines the tRNA pocket. The active-site Proton acceptor is His19. Residues Tyr64, Asn66, and Asn112 each contribute to the tRNA site.

This sequence belongs to the PTH family. In terms of assembly, monomer.

The protein resides in the cytoplasm. The enzyme catalyses an N-acyl-L-alpha-aminoacyl-tRNA + H2O = an N-acyl-L-amino acid + a tRNA + H(+). Functionally, hydrolyzes ribosome-free peptidyl-tRNAs (with 1 or more amino acids incorporated), which drop off the ribosome during protein synthesis, or as a result of ribosome stalling. In terms of biological role, catalyzes the release of premature peptidyl moieties from peptidyl-tRNA molecules trapped in stalled 50S ribosomal subunits, and thus maintains levels of free tRNAs and 50S ribosomes. In Mesoplasma florum (strain ATCC 33453 / NBRC 100688 / NCTC 11704 / L1) (Acholeplasma florum), this protein is Peptidyl-tRNA hydrolase.